The primary structure comprises 413 residues: Ras association domain-containing protein 5 (413 aa).

Residues 1-105 (MASPAIGQRP…RDVRSIFEQP (105 aa)) are disordered. Basic and acidic residues predominate over residues 61 to 74 (ARGDPEPTPRDCRH). A Phorbol-ester/DAG-type zinc finger spans residues 117–165 (GHRFAELALRGGPGWCDLCGREVLRQALRCANCKFTCHPECRSLIQLDC). Phosphoserine is present on residues serine 177 and serine 274. The Ras-associating domain maps to 265–359 (PAATTDKRTS…LSFVLKENET (95 aa)). Position 347 is a phosphothreonine (threonine 347). The SARAH domain maps to 361–408 (DVEWDAFSIPELQNFLTILEKEEQDKIHQLQKKYNKFRQKLEEALRES).

In terms of assembly, interacts directly with activated HRAS; a RASSF5-STK4/MST1 complex probably associates with activated HRAS. Interacts with KRAS. Probably interacts with Ras-like GTPases RRAS, MRAS, RAP1B, RAP2A and RALA. Interacts with RRAS2. Can self-associate. Interacts with RSSF1 isoform A. The RSSF1 isoform A-RSSF5 heterodimer probably mediates the association of RSSF1 with HRAS. Isoform 2 interacts with activated RAP1A and ITGAL/LFA-1. Binds STK4/MST1, inhibiting STK4/MST1 autoactivation.

It localises to the cytoplasm. The protein localises to the cytoskeleton. Its function is as follows. Potential tumor suppressor. Seems to be involved in lymphocyte adhesion by linking RAP1A activation upon T-cell receptor or chemokine stimulation to integrin activation. Stimulates lymphocyte polarization and the patch-like distribution of ITGAL/LFA-1, resulting in an enhanced adhesion to ICAM1. Together with RAP1A may participate in regulation of microtubule growth. The association with activated RAP1A is required for directional movement of endothelial cells during wound healing. May be involved in regulation of Ras apoptotic function. The RASSF5-STK4/MST1 complex may mediate HRAS and KRAS induced apoptosis. The sequence is that of Ras association domain-containing protein 5 (Rassf5) from Rattus norvegicus (Rat).